A 302-amino-acid chain; its full sequence is uncharacterized protein (302 aa).

7 helical membrane passes run 25–45, 58–78, 104–124, 158–178, 182–202, 215–235, and 247–267; these read SFIF…LQIF, FSYL…VIAL, IQVG…WMFL, YGLL…ATVL, FAWA…QYVP, ALSI…GYLL, and MMYI…MFYL. The region spanning 175-245 is the PQ-loop domain; that stretch reads ATVLSSNFAW…SRLPGTNWTT (71 aa).

Its subcellular location is the membrane. This is an uncharacterized protein from Schizosaccharomyces pombe (strain 972 / ATCC 24843) (Fission yeast).